The following is a 490-amino-acid chain: NAI2-like protein (490 aa).

Residues 1–24 (MGRKYVVLGLAVCLFLSSFNEVSC) form the signal peptide. Disordered stretches follow at residues 43–83 (EEGE…VDKF) and 155–206 (AATN…FNKG). Residues 136 to 163 (IADERRQRLEDIERKLKAAAATNIVVED) adopt a coiled-coil conformation. Over residues 171 to 183 (KVEETQEVVKFES) the composition is skewed to basic and acidic residues. The span at 184–199 (ESSSASSESRRQSSSS) shows a compositional bias: low complexity. Residues 433 to 465 (TFEKTVANLSRVIEEASQAYEEYHVVVRKWKEE) adopt a coiled-coil conformation.

This chain is NAI2-like protein, found in Arabidopsis thaliana (Mouse-ear cress).